A 539-amino-acid chain; its full sequence is Sorting nexin-27 (539 aa).

Residues 1–40 (MADEDGEGIHPSTPHRNGGGGGGSGLHCAGNGGGGGGGPR) form a disordered region. Gly residues predominate over residues 17–39 (NGGGGGGSGLHCAGNGGGGGGGP). The 94-residue stretch at 41 to 134 (VVRIVKSESG…ELILTVLSVP (94 aa)) folds into the PDZ domain. 2 positions are modified to phosphoserine: serine 49 and serine 60. A PX domain is found at 159-267 (QAVPISVPTY…EFLSESDENY (109 aa)). The region spanning 271-360 (SDVELRVALP…TCLTIRKWLF (90 aa)) is the Ras-associating domain. The segment at 271–360 (SDVELRVALP…TCLTIRKWLF (90 aa)) is FERM-like region F1. An FERM-like region F2 region spans residues 371–419 (NDLAVTYFFHQAVDDVKKGYIKAEEKSYQLQKLYEQRKMVMYLNMLRTC). The interval 423-523 (NEIIFPHCAC…RVFCELKWRK (101 aa)) is FERM-like region F3.

As to quaternary structure, core component of the SNX27-retromer, a multiprotein complex composed of SNX27, the WASH complex and the retromer complex. Interacts (via PDZ domain) with a number of target transmembrane proteins (via PDZ-binding motif): ABCC4, ADRB2, ARHGEF7, GRIA1, GRIA2, GRIN1, GRIN2A GRIN2C, KCNJ6, KCNJ9 and SLC2A1/GLUT1. Interacts (via the FERM-like regions) with the WASH complex. Interacts with SNX1. Interacts with CYTIP. Interacts with DGKZ. Interacts with MCC. Interacts (via PDZ domains) with SLC9A3; directs SLC9A3 membrane insertion from early endosomes to the plasma membrane. As to expression, isoform 1 is predominantly expressed in the testis, whereas isoform 2 is predominant in various brain regions, including, neocortex, paleocortex, striatum, hippocampus, cerebellum and brain stem. Expressed in cells of hematopoietic origin.

It localises to the early endosome membrane. It is found in the cytoplasm. The protein resides in the cytosol. Functionally, involved in the retrograde transport from endosome to plasma membrane, a trafficking pathway that promotes the recycling of internalized transmembrane proteins. Following internalization, endocytosed transmembrane proteins are delivered to early endosomes and recycled to the plasma membrane instead of being degraded in lysosomes. SNX27 specifically binds and directs sorting of a subset of transmembrane proteins containing a PDZ-binding motif at the C-terminus: following interaction with target transmembrane proteins, associates with the retromer complex, preventing entry into the lysosomal pathway, and promotes retromer-tubule based plasma membrane recycling. SNX27 also binds with the WASH complex. Interacts with membranes containing phosphatidylinositol-3-phosphate (PtdIns(3P)). May participate in establishment of natural killer cell polarity. Recruits CYTIP to early endosomes. The polypeptide is Sorting nexin-27 (Snx27) (Rattus norvegicus (Rat)).